A 652-amino-acid polypeptide reads, in one-letter code: ATP-binding cassette sub-family G member 5 (652 aa).

The tract at residues 1–30 is disordered; the sequence is MSELPFLSPEGARGPHNNRGSQSSLEEGSV. Residues 1-384 are Cytoplasmic-facing; sequence MSELPFLSPE…RVTRNLMRNK (384 aa). Residues 18 to 30 show a composition bias toward polar residues; sequence NRGSQSSLEEGSV. An ABC transporter domain is found at 39–294; it reads LGVLNVSFSV…FNNCGYPCPE (256 aa). 87 to 94 is an ATP binding site; that stretch reads GSSGSGKT. A helical membrane pass occupies residues 385–405; the sequence is QVVIMRLVQNLIMGLFLIFYL. The 258-residue stretch at 389–646 folds into the ABC transmembrane type-2 domain; that stretch reads MRLVQNLIMG…ILGMVVFKVR (258 aa). At 406-422 the chain is on the extracellular side; the sequence is LRVQNNMLKGAVQDRVG. Residues 423–443 form a helical membrane-spanning segment; it reads LLYQLVGATPYTGMLNAVNLF. Over 444-468 the chain is Cytoplasmic; that stretch reads PMLRAVSDQESQDGLYQKWQMLLAY. A helical transmembrane segment spans residues 469–490; that stretch reads VLHALPFSIVATVIFSSVCYWT. Over 491–501 the chain is Extracellular; it reads LGLYPEVARFG. Residues 502-522 form a helical membrane-spanning segment; the sequence is YFSAALLAPHLIGEFLTLVLL. The Cytoplasmic portion of the chain corresponds to 523–529; sequence GMVQNPN. The helical transmembrane segment at 530–550 threads the bilayer; sequence IVNSIVALLSISGLLIGSGFI. The Extracellular segment spans residues 551–624; sequence RNIEEMPIPL…PGATSRFTTN (74 aa). 2 N-linked (GlcNAc...) asparagine glycosylation sites follow: asparagine 585 and asparagine 592. The helical transmembrane segment at 625–645 threads the bilayer; sequence FLILYSFIPTLVILGMVVFKV. The Cytoplasmic portion of the chain corresponds to 646 to 652; sequence RDYLISR.

It belongs to the ABC transporter superfamily. ABCG family. Eye pigment precursor importer (TC 3.A.1.204) subfamily. As to quaternary structure, heterodimer with ABCG8. The cofactor is Mg(2+). Post-translationally, N-glycosylated. N-glycosylation is important for efficient export out of the endoplasmic reticulum. Detected in liver (at protein level). Expressed only in liver and intestine.

Its subcellular location is the cell membrane. It is found in the apical cell membrane. The catalysed reaction is cholesterol(in) + ATP + H2O = cholesterol(out) + ADP + phosphate + H(+). It catalyses the reaction sitosterol(in) + ATP + H2O = sitosterol(out) + ADP + phosphate + H(+). ABCG5 and ABCG8 form an obligate heterodimer that mediates Mg(2+)- and ATP-dependent sterol transport across the cell membrane. Plays an essential role in the selective transport of dietary plant sterols and cholesterol in and out of the enterocytes and in the selective sterol excretion by the liver into bile. Required for normal sterol homeostasis. The heterodimer with ABCG8 has ATPase activity. The sequence is that of ATP-binding cassette sub-family G member 5 from Rattus norvegicus (Rat).